Reading from the N-terminus, the 397-residue chain is Odorant receptor 2a (397 aa).

Over 1-38 the chain is Cytoplasmic; sequence MEKQEDFKLNTHSAVYYHWRVWELTGLMRPPGVSSLLY. The chain crosses the membrane as a helical span at residues 39-59; that stretch reads VVYSITVNLVVTVLFPLSLLA. Over 60-72 the chain is Extracellular; the sequence is RLLFTTNMAGLCE. The chain crosses the membrane as a helical span at residues 73 to 92; sequence NLTITITDIVANLKFANVYM. Topologically, residues 93–131 are cytoplasmic; that stretch reads VRKQLHEIRSLLRLMDARARLVGDPEEISALRKEVNIAQ. A helical transmembrane segment spans residues 132–150; the sequence is GTFRTFASIFVFGTTLSCV. The Extracellular portion of the chain corresponds to 151-176; that stretch reads RVVVRPDRELLYPAWFGVDWMHSTRN. A helical transmembrane segment spans residues 177–197; it reads YVLINIYQLFGLIVQAIQNCA. Residues 198–272 lie on the Cytoplasmic side of the membrane; it reads SDSYPPAFLC…IIQRVLSVPC (75 aa). Residues 273–293 traverse the membrane as a helical segment; the sequence is MAQFVCSAAVQCTVAMHFLYV. Over 294–301 the chain is Extracellular; sequence ADDHDHTA. Residues 302–322 traverse the membrane as a helical segment; that stretch reads MIISIVFFSAVTLEVFVICYF. Topologically, residues 323 to 363 are cytoplasmic; that stretch reads GDRMRTQSEALCDAFYDCNWIEQLPKFKRELLFTLARTQRP. Residues 364–383 form a helical membrane-spanning segment; sequence SLIYAGNYIALSLETFEQVM. At 384–397 the chain is on the extracellular side; sequence RFTYSVFTLLLRAK.

Belongs to the insect chemoreceptor superfamily. Heteromeric odorant receptor channel (TC 1.A.69) family. Or2a subfamily. Interacts with Orco. Complexes exist early in the endomembrane system in olfactory sensory neurons (OSNs), coupling these complexes to the conserved ciliary trafficking pathway. As to expression, expressed in 20 sensory neurons on the distal edge of the antenna.

The protein localises to the cell membrane. Functionally, odorant receptor which mediates acceptance or avoidance behavior, depending on its substrates. The odorant receptor repertoire encodes a large collection of odor stimuli that vary widely in identity, intensity, and duration. May form a complex with Orco to form odorant-sensing units, providing sensitive and prolonged odorant signaling and calcium permeability. In Drosophila melanogaster (Fruit fly), this protein is Odorant receptor 2a (Or2a).